The sequence spans 61 residues: Photosystem II reaction center protein K (61 aa).

Positions 1–24 (MPNIFSLICICLNSALQPSGFFFA) are excised as a propeptide. Residues 36-56 (IVDFMPVIPVLFFLLAFVWQA) traverse the membrane as a helical segment.

Belongs to the PsbK family. PSII is composed of 1 copy each of membrane proteins PsbA, PsbB, PsbC, PsbD, PsbE, PsbF, PsbH, PsbI, PsbJ, PsbK, PsbL, PsbM, PsbT, PsbX, PsbY, PsbZ, Psb30/Ycf12, at least 3 peripheral proteins of the oxygen-evolving complex and a large number of cofactors. It forms dimeric complexes.

It is found in the plastid. The protein localises to the chloroplast thylakoid membrane. In terms of biological role, one of the components of the core complex of photosystem II (PSII). PSII is a light-driven water:plastoquinone oxidoreductase that uses light energy to abstract electrons from H(2)O, generating O(2) and a proton gradient subsequently used for ATP formation. It consists of a core antenna complex that captures photons, and an electron transfer chain that converts photonic excitation into a charge separation. The protein is Photosystem II reaction center protein K of Nymphaea alba (White water-lily).